The primary structure comprises 312 residues: Homoserine O-succinyltransferase (312 aa).

Cys142 (acyl-thioester intermediate) is an active-site residue. Substrate contacts are provided by Lys163 and Ser192. The active-site Proton acceptor is the His235. Glu237 is a catalytic residue. Arg249 contacts substrate.

It belongs to the MetA family.

Its subcellular location is the cytoplasm. It carries out the reaction L-homoserine + succinyl-CoA = O-succinyl-L-homoserine + CoA. It participates in amino-acid biosynthesis; L-methionine biosynthesis via de novo pathway; O-succinyl-L-homoserine from L-homoserine: step 1/1. Transfers a succinyl group from succinyl-CoA to L-homoserine, forming succinyl-L-homoserine. The chain is Homoserine O-succinyltransferase from Alteromonas mediterranea (strain DSM 17117 / CIP 110805 / LMG 28347 / Deep ecotype).